Consider the following 45-residue polypeptide: Large ribosomal subunit protein bL34 (45 aa).

The interval 1–45 is disordered; sequence MTKRTFGGTSRKRKRVSGFRVRMRSHTGRRVVRTRRKRGRSRLTV. The span at 10 to 45 shows a compositional bias: basic residues; the sequence is SRKRKRVSGFRVRMRSHTGRRVVRTRRKRGRSRLTV.

This sequence belongs to the bacterial ribosomal protein bL34 family.

This Prochlorococcus marinus (strain NATL2A) protein is Large ribosomal subunit protein bL34.